A 491-amino-acid polypeptide reads, in one-letter code: Argininosuccinate lyase (491 aa).

Belongs to the lyase 1 family. Argininosuccinate lyase subfamily.

It is found in the cytoplasm. It carries out the reaction 2-(N(omega)-L-arginino)succinate = fumarate + L-arginine. It participates in amino-acid biosynthesis; L-arginine biosynthesis; L-arginine from L-ornithine and carbamoyl phosphate: step 3/3. The polypeptide is Argininosuccinate lyase (Methanosarcina mazei (strain ATCC BAA-159 / DSM 3647 / Goe1 / Go1 / JCM 11833 / OCM 88) (Methanosarcina frisia)).